A 193-amino-acid chain; its full sequence is Protein D5 (193 aa).

Functionally, repression of replication initiation (possible). The protein is Protein D5 (ddpE) of Dictyostelium discoideum (Social amoeba).